Here is a 260-residue protein sequence, read N- to C-terminus: Lipid II isoglutaminyl synthase (glutamine-hydrolyzing) subunit GatD (260 aa).

A GATase cobBQ-type domain is found at 16–214 (QLNIAHLYGN…FHGPILSRNA (199 aa)). Residue cysteine 107 is the Nucleophile of the active site. Arginine 142 is a binding site for substrate. Histidine 206 is a catalytic residue.

It belongs to the CobB/CobQ family. GatD subfamily. In terms of assembly, forms a heterodimer with MurT.

The catalysed reaction is beta-D-GlcNAc-(1-&gt;4)-Mur2Ac(oyl-L-Ala-gamma-D-Glu-L-Lys-D-Ala-D-Ala)-di-trans,octa-cis-undecaprenyl diphosphate + L-glutamine + ATP + H2O = beta-D-GlcNAc-(1-&gt;4)-Mur2Ac(oyl-L-Ala-D-isoglutaminyl-L-Lys-D-Ala-D-Ala)-di-trans,octa-cis-undecaprenyl diphosphate + L-glutamate + ADP + phosphate + H(+). The enzyme catalyses L-glutamine + H2O = L-glutamate + NH4(+). It participates in cell wall biogenesis; peptidoglycan biosynthesis. Functionally, the lipid II isoglutaminyl synthase complex catalyzes the formation of alpha-D-isoglutamine in the cell wall lipid II stem peptide. The GatD subunit catalyzes the hydrolysis of glutamine to glutamate and ammonia. The resulting ammonia molecule is channeled to the active site of MurT. The polypeptide is Lipid II isoglutaminyl synthase (glutamine-hydrolyzing) subunit GatD (Streptococcus pneumoniae (strain ATCC BAA-255 / R6)).